A 447-amino-acid chain; its full sequence is Chromosomal replication initiator protein DnaA (447 aa).

The tract at residues Met1–Lys66 is domain I, interacts with DnaA modulators. The segment at Lys66 to Ser102 is domain II. Positions Asn103 to Ser319 are domain III, AAA+ region. The ATP site is built by Gly146, Gly148, Lys149, and Thr150. The segment at Ser320–Gly447 is domain IV, binds dsDNA.

Belongs to the DnaA family. In terms of assembly, oligomerizes as a right-handed, spiral filament on DNA at oriC.

The protein resides in the cytoplasm. In terms of biological role, plays an essential role in the initiation and regulation of chromosomal replication. ATP-DnaA binds to the origin of replication (oriC) to initiate formation of the DNA replication initiation complex once per cell cycle. Binds the DnaA box (a 9 base pair repeat at the origin) and separates the double-stranded (ds)DNA. Forms a right-handed helical filament on oriC DNA; dsDNA binds to the exterior of the filament while single-stranded (ss)DNA is stabiized in the filament's interior. The ATP-DnaA-oriC complex binds and stabilizes one strand of the AT-rich DNA unwinding element (DUE), permitting loading of DNA polymerase. After initiation quickly degrades to an ADP-DnaA complex that is not apt for DNA replication. Binds acidic phospholipids. The sequence is that of Chromosomal replication initiator protein DnaA from Kosmotoga olearia (strain ATCC BAA-1733 / DSM 21960 / TBF 19.5.1).